A 1323-amino-acid polypeptide reads, in one-letter code: Sister chromatid cohesion protein PDS5 homolog A-B (1323 aa).

One copy of the HEAT repeat lies at 385–421 (FLVNDQLLGFVRERTLDKRWRVRKEAMMGLAQLYKKY). Positions 1138-1323 (PLNATGRRPY…TAQRQIDLHR (186 aa)) are disordered. A compositionally biased stretch (low complexity) spans 1153–1165 (SEISNNVSINSES). Composition is skewed to polar residues over residues 1166–1176 (DASVANRQSSE) and 1210–1220 (LDQTAPSNTGT). Basic and acidic residues predominate over residues 1235–1246 (NIRKESEEKKVD).

As to quaternary structure, interacts with the cohesin complex. Binds chromatin in a cohesin-dependent manner.

It is found in the nucleus. Its function is as follows. May regulate sister chromatid cohesion during mitosis and couple it to DNA replication. This is Sister chromatid cohesion protein PDS5 homolog A-B (pds5a-b) from Xenopus laevis (African clawed frog).